The chain runs to 186 residues: Elongation factor P (186 aa).

This sequence belongs to the elongation factor P family.

It localises to the cytoplasm. It functions in the pathway protein biosynthesis; polypeptide chain elongation. Its function is as follows. Involved in peptide bond synthesis. Stimulates efficient translation and peptide-bond synthesis on native or reconstituted 70S ribosomes in vitro. Probably functions indirectly by altering the affinity of the ribosome for aminoacyl-tRNA, thus increasing their reactivity as acceptors for peptidyl transferase. In Shewanella woodyi (strain ATCC 51908 / MS32), this protein is Elongation factor P.